The primary structure comprises 319 residues: Cytochrome f (319 aa).

Residues 1 to 35 form the signal peptide; sequence MQNRNISYWIKKCVIQSISIVILMKIIAWPSISEA. Tyr-36, Cys-56, Cys-59, and His-60 together coordinate heme. The chain crosses the membrane as a helical span at residues 285–305; sequence VQSLLVFFVSVTLAQIFLVLK.

This sequence belongs to the cytochrome f family. In terms of assembly, the 4 large subunits of the cytochrome b6-f complex are cytochrome b6, subunit IV (17 kDa polypeptide, petD), cytochrome f and the Rieske protein, while the 4 small subunits are PetG, PetL, PetM and PetN. The complex functions as a dimer. Heme is required as a cofactor.

The protein localises to the plastid. Its subcellular location is the chloroplast thylakoid membrane. Functionally, component of the cytochrome b6-f complex, which mediates electron transfer between photosystem II (PSII) and photosystem I (PSI), cyclic electron flow around PSI, and state transitions. In Physcomitrium patens (Spreading-leaved earth moss), this protein is Cytochrome f.